A 417-amino-acid polypeptide reads, in one-letter code: MATLEDGTSEDRVANDEYKIWKKNTPFLYDLVMTHALEWPSLSVQWLPDVAKDNSDHTIHRLILGTHTSDEQNHLLISKICMPTDDAQFDASRYDTERSEYGGFGAVNGKVEPDIRINHEGEVNRARYMPQKSNIIATKSPHADVYIFDYLKHSAVPRDNTFNPLIRLKGHTKEGYGLSWNPNKEGLILSASDDQTVCHWDINANQNVAGELQAKDVFKGHESVVEDVAWHVLHDGVFGSVGDDKKLLIWDVRTSTPGHCIDAHSAEVNCLAFNPYSEFILATGSADKTVALWDLRNLRMKLHSFESHRDEIFQVQWSPHNETILASSGTDKRLHVWDLSKIGEDQSAEDAEDGPPELLFIHGGHTAKISDFSWNPNEPWVVCSVSEDNILQVWQMADNIYNEVDEETPADVVERQQ.

WD repeat units follow at residues Asn118–Arg158, Gly170–Gly210, Gly220–Cys260, Ala263–His303, Ser307–Ser347, and Gly364–Val404.

It belongs to the WD repeat RBAP46/RBAP48/MSI1 family. Binds directly to helix 1 of the histone fold of histone H4, a region that is not accessible when H4 is in chromatin. Probable component of a NuRD-like complex, composed of at least lin-53 and hda-1. Interacts with lin-35. Interacts with hda-1; the interaction is direct. Component of the DRM complex, at least composed of lin-9, lin-35, lin-37, lin-52, lin-53, lin-54- dpl-1 and efl-1. Interacts with hcp-3.

It localises to the nucleus. Its subcellular location is the chromosome. The protein localises to the centromere. Core histone-binding subunit that may target chromatin assembly factors, chromatin remodeling factors and histone deacetylases to their histone substrates in a manner that is regulated by nucleosomal DNA. Required for hcp-3 and his-1 stabilization, localization of hcp-3 to centromeres and for proper chromosome segregation. Synthetic multivulva class B (synMuvB) protein. SynMuvB proteins are required to repress the induction of vulval development by Ras signaling and probably act by forming the multiprotein DRM complex that represses transcription. The polypeptide is Probable histone-binding protein lin-53 (Caenorhabditis elegans).